A 177-amino-acid polypeptide reads, in one-letter code: Transcriptional regulator MET31 (177 aa).

The segment at 95–117 (YSCAKCQLKFSRSSDLRRHEKVH) adopts a C2H2-type zinc-finger fold.

As to quaternary structure, interacts with MET4 and MET28.

Its subcellular location is the cytoplasm. It localises to the nucleus. Functionally, auxiliary transcriptional regulator of sulfur amino acid metabolism. Involved in the transcriptional activation of MET28. This Saccharomyces cerevisiae (strain ATCC 204508 / S288c) (Baker's yeast) protein is Transcriptional regulator MET31 (MET31).